Reading from the N-terminus, the 261-residue chain is MYTDLKDKVVVVTGGSKGLGRAMAVRFGQEQSKVVVNYRSNEEEALEVKKEIEEAGGQAIIVRGDVTKEEDVVNLVETAVKEFGSLDVMINNAGVENPVPSHELSLENWNQVIDTNLTGAFLGSREAIKYFVENDIKGNVINMSSVHEMIPWPLFVHYAASKGGMKLMTETLALEYAPKGIRVNNIGPGAIDTPINAEKFADPEQRADVESMIPMGYIGKPEEIASVAAFLASSQASYVTGITLFADGGMTKYPSFQAGRG.

V11–V35 contacts NADP(+). S145 lines the substrate pocket. The active-site Proton acceptor is Y158.

The protein belongs to the short-chain dehydrogenases/reductases (SDR) family. As to quaternary structure, homotetramer.

It catalyses the reaction D-glucose + NAD(+) = D-glucono-1,5-lactone + NADH + H(+). It carries out the reaction D-glucose + NADP(+) = D-glucono-1,5-lactone + NADPH + H(+). This Priestia megaterium (Bacillus megaterium) protein is Glucose 1-dehydrogenase 2 (gdhII).